Consider the following 257-residue polypeptide: Ribonuclease PH (257 aa).

Residues Arg88 and 126–128 contribute to the phosphate site; that span reads GTR.

It belongs to the RNase PH family. Homohexameric ring arranged as a trimer of dimers.

The enzyme catalyses tRNA(n+1) + phosphate = tRNA(n) + a ribonucleoside 5'-diphosphate. Phosphorolytic 3'-5' exoribonuclease that plays an important role in tRNA 3'-end maturation. Removes nucleotide residues following the 3'-CCA terminus of tRNAs; can also add nucleotides to the ends of RNA molecules by using nucleoside diphosphates as substrates, but this may not be physiologically important. Probably plays a role in initiation of 16S rRNA degradation (leading to ribosome degradation) during starvation. The chain is Ribonuclease PH from Nocardia farcinica (strain IFM 10152).